A 121-amino-acid polypeptide reads, in one-letter code: Large ribosomal subunit protein uL14 (121 aa).

Belongs to the universal ribosomal protein uL14 family. Part of the 50S ribosomal subunit. Forms a cluster with proteins L3 and L19. In the 70S ribosome, L14 and L19 interact and together make contacts with the 16S rRNA in bridges B5 and B8.

In terms of biological role, binds to 23S rRNA. Forms part of two intersubunit bridges in the 70S ribosome. This is Large ribosomal subunit protein uL14 from Prochlorococcus marinus (strain MIT 9515).